Consider the following 418-residue polypeptide: Dihydrolipoyllysine-residue acetyltransferase component of pyruvate dehydrogenase complex (418 aa).

One can recognise a Lipoyl-binding domain in the interval 2-78 (PIKLLMPALS…PVNSLIAVLI (77 aa)). Lysine 43 carries the N6-lipoyllysine modification. Residues 133–170 (FASPLAKRLAKIQNVRIEEIKGSGPHGRIIKQDVLSHK) form the Peripheral subunit-binding (PSBD) domain. The active site involves histidine 388.

It belongs to the 2-oxoacid dehydrogenase family. Forms a 24-polypeptide structural core with octahedral symmetry. It depends on (R)-lipoate as a cofactor.

The enzyme catalyses N(6)-[(R)-dihydrolipoyl]-L-lysyl-[protein] + acetyl-CoA = N(6)-[(R)-S(8)-acetyldihydrolipoyl]-L-lysyl-[protein] + CoA. The pyruvate dehydrogenase complex catalyzes the overall conversion of pyruvate to acetyl-CoA and CO(2). It contains multiple copies of three enzymatic components: pyruvate dehydrogenase (E1), dihydrolipoamide acetyltransferase (E2) and lipoamide dehydrogenase (E3). This is Dihydrolipoyllysine-residue acetyltransferase component of pyruvate dehydrogenase complex (pdhC) from Rickettsia bellii (strain RML369-C).